The following is a 419-amino-acid chain: uncharacterized protein (419 aa).

Belongs to the MT-A70-like family.

The protein localises to the cytoplasm. This is an uncharacterized protein from Schizosaccharomyces pombe (strain 972 / ATCC 24843) (Fission yeast).